A 480-amino-acid chain; its full sequence is Endoplasmic reticulum lectin 1 (480 aa).

The N-terminal stretch at 1–27 (MRRSDRFPCAGASLLVVLCGVFPSSFG) is a signal peptide. 2 MRH domains span residues 108-245 (SSCS…LCNH) and 339-466 (SYCF…ICKI). An intrachain disulfide couples cysteine 110 to cysteine 123. The disordered stretch occupies residues 152–172 (VKKSPSEAGENQEDKERTEGH). Residues 163 to 172 (QEDKERTEGH) show a composition bias toward basic and acidic residues. Disulfide bonds link cysteine 198–cysteine 231, cysteine 214–cysteine 243, cysteine 341–cysteine 354, cysteine 418–cysteine 452, and cysteine 433–cysteine 464.

It is found in the endoplasmic reticulum lumen. Its function is as follows. Probable lectin that binds selectively to improperly folded lumenal proteins. May function in endoplasmic reticulum quality control and endoplasmic reticulum-associated degradation (ERAD) of both non-glycosylated proteins and glycoproteins. In Xenopus laevis (African clawed frog), this protein is Endoplasmic reticulum lectin 1 (erlec1).